A 586-amino-acid polypeptide reads, in one-letter code: Proteasome-associated ATPase (586 aa).

Residues 11–76 (AWRELEAVRA…LREEVDRLGQ (66 aa)) adopt a coiled-coil conformation. 273-278 (GCGKTL) is a binding site for ATP. The tract at residues 585-586 (YL) is docks into pockets in the proteasome alpha-ring.

The protein belongs to the AAA ATPase family. Homohexamer. Assembles into a hexameric ring structure that caps the 20S proteasome core. Strongly interacts with the prokaryotic ubiquitin-like protein Pup through a hydrophobic interface; the interacting region of ARC lies in its N-terminal coiled-coil domain. There is one Pup binding site per ARC hexamer ring. Upon ATP-binding, the C-terminus of ARC interacts with the alpha-rings of the proteasome core, possibly by binding to the intersubunit pockets.

It participates in protein degradation; proteasomal Pup-dependent pathway. In terms of biological role, ATPase which is responsible for recognizing, binding, unfolding and translocation of pupylated proteins into the bacterial 20S proteasome core particle. May be essential for opening the gate of the 20S proteasome via an interaction with its C-terminus, thereby allowing substrate entry and access to the site of proteolysis. Thus, the C-termini of the proteasomal ATPase may function like a 'key in a lock' to induce gate opening and therefore regulate proteolysis. The polypeptide is Proteasome-associated ATPase (Nocardia farcinica (strain IFM 10152)).